The sequence spans 106 residues: Nucleoid-associated protein Nwi_0368 (106 aa).

This sequence belongs to the YbaB/EbfC family. Homodimer.

It localises to the cytoplasm. It is found in the nucleoid. In terms of biological role, binds to DNA and alters its conformation. May be involved in regulation of gene expression, nucleoid organization and DNA protection. The sequence is that of Nucleoid-associated protein Nwi_0368 from Nitrobacter winogradskyi (strain ATCC 25391 / DSM 10237 / CIP 104748 / NCIMB 11846 / Nb-255).